The sequence spans 972 residues: Glycine dehydrogenase (decarboxylating) (972 aa).

Lys-713 carries the N6-(pyridoxal phosphate)lysine modification.

Belongs to the GcvP family. As to quaternary structure, the glycine cleavage system is composed of four proteins: P, T, L and H. It depends on pyridoxal 5'-phosphate as a cofactor.

It carries out the reaction N(6)-[(R)-lipoyl]-L-lysyl-[glycine-cleavage complex H protein] + glycine + H(+) = N(6)-[(R)-S(8)-aminomethyldihydrolipoyl]-L-lysyl-[glycine-cleavage complex H protein] + CO2. In terms of biological role, the glycine cleavage system catalyzes the degradation of glycine. The P protein binds the alpha-amino group of glycine through its pyridoxal phosphate cofactor; CO(2) is released and the remaining methylamine moiety is then transferred to the lipoamide cofactor of the H protein. The chain is Glycine dehydrogenase (decarboxylating) from Aromatoleum aromaticum (strain DSM 19018 / LMG 30748 / EbN1) (Azoarcus sp. (strain EbN1)).